The chain runs to 313 residues: Type I restriction enzyme EcoprrI endonuclease subunit (313 aa).

Belongs to the HsdR family. In terms of assembly, the type I restriction/modification system is composed of three polypeptides R, M and S; the restriction enzyme has stoichiometry R(2)M(2)S(1) while the methyltransferase is M(2)S(1).

It carries out the reaction Endonucleolytic cleavage of DNA to give random double-stranded fragments with terminal 5'-phosphates, ATP is simultaneously hydrolyzed.. Its function is as follows. The subtype C restriction (R) subunit of a type I restriction enzyme that recognizes 5'-CCAN(7)RTGC-3' and cleaves a random distance away. The R subunit is required for both endonuclease and ATPase activities but not for modification. Cleaves only non-methylated DNA, hemi-methylated and fully methylated DNA are not substrates. After locating a non-methylated recognition site, the enzyme complex serves as a molecular motor that translocates DNA in an ATP-dependent manner until a collision occurs that triggers cleavage. The prr locus restricts phage T4 mutants lacking polynucleotide kinase or RNA ligase; T4 mutants lacking these genes manifest a T4-induced anticodon nuclease (ACNase). This is a putative 'masking-agent' for the ACNase encoded by prrC. It is thought that Stp and other T4-encoded ACNase factors counteract the masking agents, thus activating the latent ACNase. The protein is Type I restriction enzyme EcoprrI endonuclease subunit of Escherichia coli.